We begin with the raw amino-acid sequence, 122 residues long: Large ribosomal subunit protein uL14 (122 aa).

It belongs to the universal ribosomal protein uL14 family. As to quaternary structure, part of the 50S ribosomal subunit. Forms a cluster with proteins L3 and L19. In the 70S ribosome, L14 and L19 interact and together make contacts with the 16S rRNA in bridges B5 and B8.

Functionally, binds to 23S rRNA. Forms part of two intersubunit bridges in the 70S ribosome. This is Large ribosomal subunit protein uL14 from Lachnospira eligens (strain ATCC 27750 / DSM 3376 / VPI C15-48 / C15-B4) (Eubacterium eligens).